The chain runs to 252 residues: Ciliogenesis and planar polarity effector 2 (252 aa).

The small GTPase-like stretch occupies residues 46 to 252; that stretch reads QMNVDLVRYK…LRETSSEIIV (207 aa). Residues 62–67 and 173–176 contribute to the GTP site; these read TGVGKS and TKFD.

This sequence belongs to the small GTPase superfamily. Rab family.

It is found in the cytoplasm. The protein resides in the cytoskeleton. Its subcellular location is the cilium basal body. Potential effector of the planar cell polarity signaling pathway. Plays a role in targeted membrane trafficking most probably at the level of vesicle fusion with membranes. Involved in cilium biogenesis by regulating the transport of cargo proteins to the basal body and to the apical tips of cilia. More generally involved in exocytosis in secretory cells. In Danio rerio (Zebrafish), this protein is Ciliogenesis and planar polarity effector 2 (cplane2).